The primary structure comprises 694 residues: Probable metal-nicotianamine transporter YSL8 (694 aa).

The next 14 helical transmembrane spans lie at 38-58, 62-82, 110-130, 154-174, 215-235, 265-285, 319-339, 393-413, 421-441, 467-487, 506-526, 567-587, 608-628, and 643-663; these read ITVR…FIVM, LTSG…FFLM, CVIS…ILGM, LGRL…SIVP, ILFK…FYAA, VGVG…GSVV, VFIS…SIVL, IAAA…PHIF, VVWA…GTGL, GGVV…STAS, MFVS…MVFW, LRFC…KEVA, FFLG…LFLW, and VASG…ILSL.

Belongs to the YSL (TC 2.A.67.2) family. Expressed in root epidermis and exoderm.

It is found in the membrane. Functionally, may be involved in the transport of nicotianamine-chelated metals. The sequence is that of Probable metal-nicotianamine transporter YSL8 (YSL8) from Oryza sativa subsp. japonica (Rice).